The following is a 964-amino-acid chain: Fanconi-associated nuclease 1 homolog (964 aa).

A disordered region spans residues Ser31 to Asp56. The UBZ4-type zinc finger occupies Trp63–Thr92. Residues Cys66, Cys69, His83, and Cys87 each coordinate Zn(2+). Mn(2+) is bound by residues Glu786, Asp907, Glu926, and Val927. The region spanning Gly844–Ser958 is the VRR-NUC domain.

This sequence belongs to the FAN1 family. Mn(2+) is required as a cofactor. Mg(2+) serves as cofactor.

It carries out the reaction Hydrolytically removes 5'-nucleotides successively from the 3'-hydroxy termini of 3'-hydroxy-terminated oligonucleotides.. Its function is as follows. Nuclease required for the repair of DNA interstrand cross-links (ICL). Acts as a 5'-3' exonuclease that anchors at a cut end of DNA and cleaves DNA successively at every third nucleotide, allowing to excise an ICL from one strand through flanking incisions. The polypeptide is Fanconi-associated nuclease 1 homolog (Oryza sativa subsp. japonica (Rice)).